A 177-amino-acid chain; its full sequence is 3-hydroxydecanoyl-[acyl-carrier-protein] dehydratase (177 aa).

The active site involves His71.

Belongs to the thioester dehydratase family. FabA subfamily. Homodimer.

The protein resides in the cytoplasm. The catalysed reaction is a (3R)-hydroxyacyl-[ACP] = a (2E)-enoyl-[ACP] + H2O. It carries out the reaction (3R)-hydroxydecanoyl-[ACP] = (2E)-decenoyl-[ACP] + H2O. It catalyses the reaction (2E)-decenoyl-[ACP] = (3Z)-decenoyl-[ACP]. It participates in lipid metabolism; fatty acid biosynthesis. In terms of biological role, necessary for the introduction of cis unsaturation into fatty acids. Catalyzes the dehydration of (3R)-3-hydroxydecanoyl-ACP to E-(2)-decenoyl-ACP and then its isomerization to Z-(3)-decenoyl-ACP. Can catalyze the dehydratase reaction for beta-hydroxyacyl-ACPs with saturated chain lengths up to 16:0, being most active on intermediate chain length. In Wigglesworthia glossinidia brevipalpis, this protein is 3-hydroxydecanoyl-[acyl-carrier-protein] dehydratase.